Here is a 154-residue protein sequence, read N- to C-terminus: Large ribosomal subunit protein uL13 (154 aa).

Belongs to the universal ribosomal protein uL13 family. Part of the 50S ribosomal subunit.

Its function is as follows. This protein is one of the early assembly proteins of the 50S ribosomal subunit, although it is not seen to bind rRNA by itself. It is important during the early stages of 50S assembly. This is Large ribosomal subunit protein uL13 from Rhizobium rhizogenes (strain K84 / ATCC BAA-868) (Agrobacterium radiobacter).